A 154-amino-acid polypeptide reads, in one-letter code: MMGGGGGGGGGGQMQQVAQEIEQMEQEVEAIDEEIERLREKQTDIDEAIEAIETLDSGSTVQVPLGGDAYIRATIEDIDEVVVSLGGGYSAEREQDGAVSTLETKKETLDDHISDLQEEKAEVETEMEELEQQAQQMQQQQMQQMMQQQEQEDE.

A disordered region spans residues 119 to 154; the sequence is EKAEVETEMEELEQQAQQMQQQQMQQMMQQQEQEDE. Over residues 132–154 the composition is skewed to low complexity; it reads QQAQQMQQQQMQQMMQQQEQEDE.

The protein belongs to the prefoldin subunit alpha family. Heterohexamer of two alpha and four beta subunits.

The protein localises to the cytoplasm. In terms of biological role, molecular chaperone capable of stabilizing a range of proteins. Seems to fulfill an ATP-independent, HSP70-like function in archaeal de novo protein folding. The polypeptide is Prefoldin subunit alpha (Haloarcula marismortui (strain ATCC 43049 / DSM 3752 / JCM 8966 / VKM B-1809) (Halobacterium marismortui)).